The primary structure comprises 1514 residues: ABC transporter C family member 5 (1514 aa).

10 consecutive transmembrane segments (helical) span residues 16–36 (LLEL…LFAV), 76–96 (FGFN…VLVL), 111–131 (FVLC…FLVL), 142–162 (PFLV…TMYV), 177–197 (SHVV…FLAW), 312–332 (VFAG…SYFV), 334–354 (YLGG…IFFT), 421–441 (WYLH…AILY), 446–466 (IAAV…IPLA), and 533–553 (FIFW…SIFL). An ABC transmembrane type-1 1 domain is found at 307-588 (AACNAVFAGL…FPDLVSMMAQ (282 aa)). One can recognise an ABC transporter 1 domain in the interval 622-845 (IEIKDGVFCW…GTDFKALVSA (224 aa)). ATP is bound at residue 657 to 664 (GTVGSGKS). Positions 899–927 (ASDLKAIKEKKKKAKRSRKKQLVQEEERV) form a coiled coil. A run of 6 helical transmembrane segments spans residues 946-966 (GALI…QIAS), 986-1006 (PTLL…FIFV), 1078-1098 (IVAV…PVAV), 1117-1137 (IVSI…AGAA), 1155-1175 (LLDC…WLCL), and 1180-1200 (LSTL…HGTI). One can recognise an ABC transmembrane type-1 2 domain in the interval 949-1231 (IPLIILAQAA…WILSFCKLEN (283 aa)). The ABC transporter 2 domain occupies 1268 to 1502 (IELVDVKVRY…KSSMFLKLVT (235 aa)). 1302–1309 (GRTGSGKS) lines the ATP pocket.

The protein belongs to the ABC transporter superfamily. ABCC family. Conjugate transporter (TC 3.A.1.208) subfamily. In terms of tissue distribution, ubiquitous, mostly in vascular tissues and epidermis, including guard cells.

The protein resides in the membrane. It catalyses the reaction ATP + H2O + xenobioticSide 1 = ADP + phosphate + xenobioticSide 2.. (E(2)17G) transport activity in negatively regulated by organic anions such as oestradiol-3-sulfate, luteolin-7-O-diglucuronide-4'-O-glucuronide, glycocholate, vanadate and the sulfonylurea glibenclamide, and, to a lower extent, by bafilomycin A1, NH(4)Cl, GSH, GSSG and DNB-GS. In terms of biological role, pump for glutathione S-conjugates. Involved in regulation of K(+) and Na(+) cell content. Mediates resistance to NaCl and Li(+), confers sensitivity to sulfonylurea drugs such as glibenclamide (inducer of stomatal opening), and required for stomatal opening regulation by auxin, abscisic acid (ABA) and external Ca(2+). Transports oestradiol-17-(beta-D-glucuronide) (E(2)17G). Involved in the root auxin content regulation that controls the transition from primary root elongation to lateral root formation. Plays a role in ABA-mediated germination inhibition. High-affinity inositol hexakisphosphate transporter that plays a role in guard cell signaling and phytic acid storage. Required for phytic acid accumulation in developing seeds. Phytic acid is the primary storage form of phosphorus in cereal grains and other plant seeds. In Arabidopsis thaliana (Mouse-ear cress), this protein is ABC transporter C family member 5 (ABCC5).